We begin with the raw amino-acid sequence, 183 residues long: Inosine triphosphate pyrophosphatase (183 aa).

Residue 8–13 (TGNKNK) participates in ITP binding. Glu-36 is a Mg(2+) binding site. ITP is bound by residues Lys-48, 64–65 (DT), Lys-81, 140–143 (FGWD), Lys-161, and 166–167 (HR).

It belongs to the HAM1 NTPase family. As to quaternary structure, homodimer. The cofactor is Mg(2+). Mn(2+) is required as a cofactor.

It localises to the cytoplasm. It is found in the nucleus. It catalyses the reaction ITP + H2O = IMP + diphosphate + H(+). The catalysed reaction is dITP + H2O = dIMP + diphosphate + H(+). It carries out the reaction XTP + H2O = XMP + diphosphate + H(+). Pyrophosphatase that hydrolyzes non-canonical purine nucleotides such as inosine triphosphate (ITP), deoxyinosine triphosphate (dITP) or xanthosine 5'-triphosphate (XTP) to their respective monophosphate derivatives. The enzyme does not distinguish between the deoxy- and ribose forms. Probably excludes non-canonical purines from RNA and DNA precursor pools, thus preventing their incorporation into RNA and DNA and avoiding chromosomal lesions. The sequence is that of Inosine triphosphate pyrophosphatase from Ajellomyces capsulatus (strain G186AR / H82 / ATCC MYA-2454 / RMSCC 2432) (Darling's disease fungus).